The chain runs to 616 residues: Protein NRT1/ PTR FAMILY 2.11 (616 aa).

The interval 1–22 (MERKPLELESTDNHQNPSSAVY) is disordered. The next 12 membrane-spanning stretches (helical) occupy residues 59–79 (FEKLGIIGTLSNLLVYLTAVF), 87–107 (ATIINAFSGTINFGTFVAAFL), 118–138 (LSVAVIACFLGSFVILLTAAV), 159–179 (GGQIAFLLMGLGFLVVGAGGI), 205–225 (FFNWYFFTFTFAQILSLTLVV), 233–253 (WTIGLTIPAVLMFLACLIFFA), 349–369 (VKCIVRVLPIWFASSIYYLTI), 392–412 (FVIPAATYVVFLMTGMTVFIV), 435–455 (LQRIGTGIFFATASLVVAGFV), 483–503 (AMWLIPQLSLAGVAEAFAAIG), 519–539 (FAGSIFYVGGGVSSYLGSFLI), and 566–586 (LFYFMIAGILAVNFAYFLVMS).

This sequence belongs to the major facilitator superfamily. Proton-dependent oligopeptide transporter (POT/PTR) (TC 2.A.17) family. In terms of tissue distribution, expressed in roots. Detected in shoots, stems and flowers. Expressed in veins and in the root vasculature with highest expression in lateral branching points.

The protein resides in the cell membrane. Its function is as follows. High-affinity, proton-dependent glucosinolate-specific transporter. Involved in apoplasmic phloem-loading of glucosinolates and in bidirectional long-distance transport of aliphatic but not indole glucosinolates. May be involved in removal of glucosinolates from the xylem in roots. The protein is Protein NRT1/ PTR FAMILY 2.11 (NPF2.11) of Arabidopsis thaliana (Mouse-ear cress).